The primary structure comprises 379 residues: Homoserine O-succinyltransferase (379 aa).

The AB hydrolase-1 domain maps to 51-360 (NAVLICHALS…DAPQGHDAFL (310 aa)). S157 serves as the catalytic Nucleophile. R227 contacts substrate. Catalysis depends on residues D323 and H356. D357 serves as a coordination point for substrate.

Belongs to the AB hydrolase superfamily. MetX family. As to quaternary structure, homodimer.

The protein resides in the cytoplasm. The catalysed reaction is L-homoserine + succinyl-CoA = O-succinyl-L-homoserine + CoA. The protein operates within amino-acid biosynthesis; L-methionine biosynthesis via de novo pathway; O-succinyl-L-homoserine from L-homoserine: step 1/1. Its function is as follows. Transfers a succinyl group from succinyl-CoA to L-homoserine, forming succinyl-L-homoserine. The chain is Homoserine O-succinyltransferase from Pseudomonas fluorescens (strain ATCC BAA-477 / NRRL B-23932 / Pf-5).